Consider the following 516-residue polypeptide: Bifunctional purine biosynthesis protein PurH (516 aa).

Positions 1 to 150 (MSDDRKQIKR…KNHPSVAVVV (150 aa)) constitute an MGS-like domain.

Belongs to the PurH family.

The catalysed reaction is (6R)-10-formyltetrahydrofolate + 5-amino-1-(5-phospho-beta-D-ribosyl)imidazole-4-carboxamide = 5-formamido-1-(5-phospho-D-ribosyl)imidazole-4-carboxamide + (6S)-5,6,7,8-tetrahydrofolate. The enzyme catalyses IMP + H2O = 5-formamido-1-(5-phospho-D-ribosyl)imidazole-4-carboxamide. The protein operates within purine metabolism; IMP biosynthesis via de novo pathway; 5-formamido-1-(5-phospho-D-ribosyl)imidazole-4-carboxamide from 5-amino-1-(5-phospho-D-ribosyl)imidazole-4-carboxamide (10-formyl THF route): step 1/1. It functions in the pathway purine metabolism; IMP biosynthesis via de novo pathway; IMP from 5-formamido-1-(5-phospho-D-ribosyl)imidazole-4-carboxamide: step 1/1. The polypeptide is Bifunctional purine biosynthesis protein PurH (Corynebacterium ammoniagenes (Brevibacterium ammoniagenes)).